Consider the following 106-residue polypeptide: uncharacterized protein (106 aa).

The signal sequence occupies residues 1-27 (MHHFVPSISLFMASVSFSVFFSHLATS). A helical membrane pass occupies residues 42-62 (TLFSMVPLINSSFNLSVFLFF).

It localises to the membrane. This is an uncharacterized protein from Saccharomyces cerevisiae (strain ATCC 204508 / S288c) (Baker's yeast).